The following is a 603-amino-acid chain: Myotubularin (603 aa).

S13 and S18 each carry phosphoserine. Positions 29–97 (QDVSETVPRL…GVISRIEKMG (69 aa)) constitute a GRAM domain. Residues 163 to 538 (GWTVYNPVEE…RHLELWVNYY (376 aa)) enclose the Myotubularin phosphatase domain. N288, N313, and I314 together coordinate a 1,2-diacyl-sn-glycero-3-phospho-(1D-myo-inositol-3,5-bisphosphate). A 1,2-diacyl-sn-glycero-3-phospho-(1D-myo-inositol-3-phosphate)-binding residues include N288, N313, and I314. C375 serves as the catalytic Phosphocysteine intermediate. Residues S376, D377, G378, W379, D380, R381, K417, and R421 each coordinate a 1,2-diacyl-sn-glycero-3-phospho-(1D-myo-inositol-3,5-bisphosphate). A 1,2-diacyl-sn-glycero-3-phospho-(1D-myo-inositol-3-phosphate) is bound by residues S376, D377, G378, W379, D380, and R381. R421 lines the a 1,2-diacyl-sn-glycero-3-phospho-(1D-myo-inositol-3-phosphate) pocket. Phosphothreonine is present on T495. S588 bears the Phosphoserine mark.

This sequence belongs to the protein-tyrosine phosphatase family. Non-receptor class myotubularin subfamily. In terms of assembly, heterodimer with MTMR12. Interacts with KMT2A/MLL1 (via SET domain). Interacts with DES in skeletal muscle but not in cardiac muscle. Interacts with SPEG. In terms of tissue distribution, widely expressed with highest levels detected in heart and muscle and low levels in brain (at protein level). Expressed in skeletal muscles (at protein level).

It is found in the cytoplasm. It localises to the cell membrane. Its subcellular location is the cell projection. The protein resides in the filopodium. The protein localises to the ruffle. It is found in the late endosome. It localises to the myofibril. Its subcellular location is the sarcomere. The catalysed reaction is a 1,2-diacyl-sn-glycero-3-phospho-(1D-myo-inositol-3-phosphate) + H2O = a 1,2-diacyl-sn-glycero-3-phospho-(1D-myo-inositol) + phosphate. The enzyme catalyses a 1,2-diacyl-sn-glycero-3-phospho-(1D-myo-inositol-3,5-bisphosphate) + H2O = a 1,2-diacyl-sn-glycero-3-phospho-(1D-myo-inositol-5-phosphate) + phosphate. It catalyses the reaction 1,2-dioctanoyl-sn-glycero-3-phospho-(1-D-myo-inositol-3-phosphate) + H2O = 1,2-dioctanoyl-sn-glycero-3-phospho-(1D-myo-inositol) + phosphate. It carries out the reaction 1,2-dioctanoyl-sn-glycero-3-phospho-(1D-myo-inositol-3,5-bisphosphate) + H2O = 1,2-dioctanoyl-sn-glycero-3-phospho-(1D-myo-inositol-5-phosphate) + phosphate. The catalysed reaction is 1,2-dihexadecanoyl-sn-glycero-3-phospho-(1D-myo-inositol-3,5-phosphate) + H2O = 1,2-dihexadecanoyl-sn-glycero-3-phospho-(1D-myo-inositol-5-phosphate) + phosphate. Allosterically activated by phosphatidylinositol 5-phosphate (PI5P). Functionally, lipid phosphatase which dephosphorylates phosphatidylinositol 3-monophosphate (PI3P) and phosphatidylinositol 3,5-bisphosphate (PI(3,5)P2). Has also been shown to dephosphorylate phosphotyrosine- and phosphoserine-containing peptides. Negatively regulates EGFR degradation through regulation of EGFR trafficking from the late endosome to the lysosome. Plays a role in vacuolar formation and morphology. Regulates desmin intermediate filament assembly and architecture. Plays a role in mitochondrial morphology and positioning. Required for skeletal muscle maintenance but not for myogenesis. In skeletal muscles, stabilizes MTMR12 protein levels. The chain is Myotubularin from Mus musculus (Mouse).